A 534-amino-acid chain; its full sequence is GTPase Obg (534 aa).

The Obg domain occupies 2 to 159; the sequence is ASFVDRVVLH…SDIVLELKSI (158 aa). A disordered region spans residues 63 to 82; sequence APHRHASNGGQGMGDWRGGK. Gly residues predominate over residues 71–82; it reads GGQGMGDWRGGK. An OBG-type G domain is found at 160–343; the sequence is ADIALVGFPS…LSFAMAELVT (184 aa). Residues 166–173, 191–195, 212–215, 295–298, and 324–326 each bind GTP; these read GFPSAGKS, FTTLI, DVPG, NKID, and SAS. Residues Ser-173 and Thr-193 each contribute to the Mg(2+) site. The region spanning 363-449 is the OCT domain; that stretch reads PRAVNRKEFT…ENAVVFDWEP (87 aa). The segment at 456–534 is disordered; that stretch reads ELLSGPRGTD…AASTDDGDAL (79 aa). 2 stretches are compositionally biased toward basic and acidic residues: residues 464–504 and 512–526; these read TDPR…ERKA and SARR…REAA.

This sequence belongs to the TRAFAC class OBG-HflX-like GTPase superfamily. OBG GTPase family. Monomer. Requires Mg(2+) as cofactor.

The protein localises to the cytoplasm. Its function is as follows. An essential GTPase which binds GTP, GDP and possibly (p)ppGpp with moderate affinity, with high nucleotide exchange rates and a fairly low GTP hydrolysis rate. Plays a role in control of the cell cycle, stress response, ribosome biogenesis and in those bacteria that undergo differentiation, in morphogenesis control. The sequence is that of GTPase Obg from Renibacterium salmoninarum (strain ATCC 33209 / DSM 20767 / JCM 11484 / NBRC 15589 / NCIMB 2235).